The following is a 469-amino-acid chain: Glutamine synthetase (469 aa).

In terms of domain architecture, GS beta-grasp spans 13–97; it reads HEVKFVDLRF…IRCDILEPGT (85 aa). Residues 105–469 enclose the GS catalytic domain; sequence PRSIAKRAED…PVEFELYYSV (365 aa). Residues Glu-130 and Glu-132 each contribute to the Mg(2+) site. Residue Glu-208 coordinates ATP. Mg(2+)-binding residues include Glu-213 and Glu-221. L-glutamate is bound by residues 265 to 266 and Gly-266; that span reads NG. Residue His-270 coordinates Mg(2+). Residues 272 to 274 and Ser-274 each bind ATP; that span reads HMS. The L-glutamate site is built by Arg-322, Glu-328, and Arg-340. ATP is bound by residues Arg-340, Arg-345, and Lys-353. Residue Glu-358 coordinates Mg(2+). Arg-360 lines the L-glutamate pocket. Position 398 is an O-AMP-tyrosine (Tyr-398).

The protein belongs to the glutamine synthetase family. In terms of assembly, oligomer of 12 subunits arranged in the form of two hexameric ring. Requires Mg(2+) as cofactor.

The protein resides in the cytoplasm. The catalysed reaction is L-glutamate + NH4(+) + ATP = L-glutamine + ADP + phosphate + H(+). The activity of this enzyme could be controlled by adenylation under conditions of abundant glutamine. Catalyzes the ATP-dependent biosynthesis of glutamine from glutamate and ammonia. In Escherichia coli O157:H7, this protein is Glutamine synthetase.